A 589-amino-acid polypeptide reads, in one-letter code: Multidrug transporter FLR2 (589 aa).

The interval 50–116 is disordered; it reads KEEMKQDNQT…SSTKDASKPE (67 aa). A compositionally biased stretch (low complexity) spans 56-73; the sequence is DNQTSTDSMSTSTQQETD. Asparagine 57 carries an N-linked (GlcNAc...) asparagine glycan. Over residues 107-116 the composition is skewed to basic and acidic residues; that stretch reads SSTKDASKPE. N-linked (GlcNAc...) asparagine glycosylation is present at asparagine 136. Helical transmembrane passes span 143–163, 179–199, 211–231, 234–254, 275–295, 301–321, 378–398, 417–437, 455–475, 480–500, 516–536, and 551–571; these read TFVIVQLMVLTCINYMGSSIY, VVGTLNLSMYVLGYAIGPIIF, MPLYLWTFILFTILQVACALV, IAGLVILRFITGILCSPVLAT, WAVGAVAAPVMAPILGAAMVV, WIFWLMLFMCGATLLSIIFFF, PIILAFDVYIALCYGAFYLFF, GLAFLGFCVGCVFAYTALIIF, LFLILAMCLGWCLPFSLFFFG, IHWILPIIAELFFVLSVFNLF, ASVFAGNGLCRGAFAAAFPLF, and VAWGSTLIGFITVVLSLIPFV.

The protein belongs to the major facilitator superfamily.

Its subcellular location is the cell membrane. Functionally, multidrug transporter that confers resistance to 5-flucytosine (5-FC) and clotrimazole. Further confers azole drug resistance. Plays direct roles in extrusion of 5-flucytosine and clotrimazole. This Candida glabrata (strain ATCC 2001 / BCRC 20586 / JCM 3761 / NBRC 0622 / NRRL Y-65 / CBS 138) (Yeast) protein is Multidrug transporter FLR2.